The primary structure comprises 1366 residues: DNA-directed RNA polymerase subunit beta' (1366 aa).

Residues 1 to 23 (MTSSKPKKSSRVRKTTKNSKKNH) are compositionally biased toward basic residues. A disordered region spans residues 1–37 (MTSSKPKKSSRVRKTTKNSKKNHNTMMPLLPKTPPSF). Residues cysteine 248, cysteine 315, cysteine 322, and cysteine 325 each coordinate Zn(2+). The segment at 1304 to 1366 (TAILDDPSDE…LQEEGLLSDG (63 aa)) is disordered. Positions 1354–1366 (LEGLQEEGLLSDG) are enriched in low complexity.

Belongs to the RNA polymerase beta' chain family. RpoC2 subfamily. In cyanobacteria the RNAP catalytic core is composed of 2 alpha, 1 beta, 1 beta', 1 gamma and 1 omega subunit. When a sigma factor is associated with the core the holoenzyme is formed, which can initiate transcription. Zn(2+) is required as a cofactor.

It catalyses the reaction RNA(n) + a ribonucleoside 5'-triphosphate = RNA(n+1) + diphosphate. DNA-dependent RNA polymerase catalyzes the transcription of DNA into RNA using the four ribonucleoside triphosphates as substrates. This Prochlorococcus marinus subsp. pastoris (strain CCMP1986 / NIES-2087 / MED4) protein is DNA-directed RNA polymerase subunit beta'.